A 412-amino-acid polypeptide reads, in one-letter code: Multidrug resistance protein MdtG (412 aa).

A run of 10 helical transmembrane segments spans residues 20–40, 62–82, 96–116, 119–139, 150–170, 177–197, 225–245, 260–280, 294–314, and 382–402; these read LFVA…IMPF, LVFS…GGLA, LGMS…QFLI, ALLG…ATQI, TLST…GLLA, PVFF…LYFI, VLCL…IAPI, LAFI…MSAP, ILVA…LVQT, and TVFF…YWCL.

Belongs to the major facilitator superfamily. DHA1 family. MdtG (TC 2.A.1.2.20) subfamily.

The protein resides in the cell inner membrane. The polypeptide is Multidrug resistance protein MdtG (Rahnella sp. (strain Y9602)).